A 581-amino-acid polypeptide reads, in one-letter code: Pyridine nucleotide-disulfide oxidoreductase domain-containing protein 2 (581 aa).

An FAD-binding site is contributed by 38-71 (VVIGAGHNGLVAAAYLQRLGVNTAVFERRHVIGG).

The protein belongs to the carotenoid/retinoid oxidoreductase family. Interacts with COX5B; this interaction may contribute to localize PYROXD2 to the inner face of the inner mitochondrial membrane.

It is found in the mitochondrion matrix. Probable oxidoreductase that may play a role as regulator of mitochondrial function. The sequence is that of Pyridine nucleotide-disulfide oxidoreductase domain-containing protein 2 from Homo sapiens (Human).